Here is a 250-residue protein sequence, read N- to C-terminus: Tumor necrosis factor ligand superfamily member 13 (250 aa).

The propeptide occupies 1–104; that stretch reads MPASSPFLLA…ENGERSRKRR (104 aa). Disordered regions lie at residues 61 to 82 and 89 to 108; these read EVSR…PWQS and DALE…AVLT. The region spanning 116–250 is the THD domain; sequence SVLHLVPINA…HGTFLGFVKL (135 aa). An N-linked (GlcNAc...) asparagine glycan is attached at asparagine 124. Cysteine 196 and cysteine 211 are disulfide-bonded.

This sequence belongs to the tumor necrosis factor family. Homotrimer. In terms of processing, the precursor is cleaved by furin. Expressed at high levels in transformed cell lines, cancers of colon, thyroid, lymphoid tissues and specifically expressed in monocytes and macrophages.

The protein resides in the secreted. Cytokine that binds to TNFRSF13B/TACI and to TNFRSF17/BCMA. Plays a role in the regulation of tumor cell growth. May be involved in monocyte/macrophage-mediated immunological processes. The chain is Tumor necrosis factor ligand superfamily member 13 (TNFSF13) from Homo sapiens (Human).